The chain runs to 105 residues: Integration host factor subunit beta (105 aa).

The protein belongs to the bacterial histone-like protein family. In terms of assembly, heterodimer of an alpha and a beta chain.

In terms of biological role, this protein is one of the two subunits of integration host factor, a specific DNA-binding protein that functions in genetic recombination as well as in transcriptional and translational control. In Nitrosomonas europaea (strain ATCC 19718 / CIP 103999 / KCTC 2705 / NBRC 14298), this protein is Integration host factor subunit beta.